Here is a 260-residue protein sequence, read N- to C-terminus: Meiotic recombination protein rec6 (260 aa).

A disordered region spans residues 197 to 222; that stretch reads QYSESSLLDDSQLLCSSPPVDSTEEA. A compositionally biased stretch (low complexity) spans 199-213; it reads SESSLLDDSQLLCSS.

Belongs to the TOP6B-like family. As to quaternary structure, component of the DSB catalytic core (DSBC) complex, composed of at least rec12, rec6 and rec14. The complex interacts with mde2.

In terms of biological role, required for formation of the rec12-mediated double-strand breaks (DSBs) that initiate meiotic recombination. May be involved primarily in the early steps of meiotic recombination. This is Meiotic recombination protein rec6 from Schizosaccharomyces pombe (strain 972 / ATCC 24843) (Fission yeast).